Consider the following 210-residue polypeptide: Protein-L-isoaspartate O-methyltransferase (210 aa).

Ser-60 is an active-site residue.

The protein belongs to the methyltransferase superfamily. L-isoaspartyl/D-aspartyl protein methyltransferase family.

It is found in the cytoplasm. The catalysed reaction is [protein]-L-isoaspartate + S-adenosyl-L-methionine = [protein]-L-isoaspartate alpha-methyl ester + S-adenosyl-L-homocysteine. In terms of biological role, catalyzes the methyl esterification of L-isoaspartyl residues in peptides and proteins that result from spontaneous decomposition of normal L-aspartyl and L-asparaginyl residues. It plays a role in the repair and/or degradation of damaged proteins. The protein is Protein-L-isoaspartate O-methyltransferase of Xylella fastidiosa (strain M12).